The sequence spans 69 residues: ATP synthase F(0) complex subunit 8 (69 aa).

The chain crosses the membrane as a helical span at residues 8–24; sequence TWLLTITLMILALFCIY. N6-acetyllysine; alternate is present on Lys55. Lys55 is subject to N6-succinyllysine; alternate. Lys58 carries the post-translational modification N6-acetyllysine.

This sequence belongs to the ATPase protein 8 family. As to quaternary structure, component of the ATP synthase complex composed at least of ATP5F1A/subunit alpha, ATP5F1B/subunit beta, ATP5MC1/subunit c (homooctomer), MT-ATP6/subunit a, MT-ATP8/subunit 8, ATP5ME/subunit e, ATP5MF/subunit f, ATP5MG/subunit g, ATP5MK/subunit k, ATP5MJ/subunit j, ATP5F1C/subunit gamma, ATP5F1D/subunit delta, ATP5F1E/subunit epsilon, ATP5PF/subunit F6, ATP5PB/subunit b, ATP5PD/subunit d, ATP5PO/subunit OSCP. ATP synthase complex consists of a soluble F(1) head domain (subunits alpha(3) and beta(3)) - the catalytic core - and a membrane F(0) domain - the membrane proton channel (subunits c, a, 8, e, f, g, k and j). These two domains are linked by a central stalk (subunits gamma, delta, and epsilon) rotating inside the F1 region and a stationary peripheral stalk (subunits F6, b, d, and OSCP). Interacts with PRICKLE3.

It is found in the mitochondrion membrane. Subunit 8, of the mitochondrial membrane ATP synthase complex (F(1)F(0) ATP synthase or Complex V) that produces ATP from ADP in the presence of a proton gradient across the membrane which is generated by electron transport complexes of the respiratory chain. ATP synthase complex consist of a soluble F(1) head domain - the catalytic core - and a membrane F(1) domain - the membrane proton channel. These two domains are linked by a central stalk rotating inside the F(1) region and a stationary peripheral stalk. During catalysis, ATP synthesis in the catalytic domain of F(1) is coupled via a rotary mechanism of the central stalk subunits to proton translocation. In vivo, can only synthesize ATP although its ATP hydrolase activity can be activated artificially in vitro. Part of the complex F(0) domain. The sequence is that of ATP synthase F(0) complex subunit 8 from Osphranter robustus (Wallaroo).